The primary structure comprises 147 residues: Large ribosomal subunit protein bL9 (147 aa).

The protein belongs to the bacterial ribosomal protein bL9 family.

Functionally, binds to the 23S rRNA. In Mesoplasma florum (strain ATCC 33453 / NBRC 100688 / NCTC 11704 / L1) (Acholeplasma florum), this protein is Large ribosomal subunit protein bL9.